The following is a 409-amino-acid chain: Gamma-glutamyl phosphate reductase (409 aa).

Belongs to the gamma-glutamyl phosphate reductase family.

The protein resides in the cytoplasm. It catalyses the reaction L-glutamate 5-semialdehyde + phosphate + NADP(+) = L-glutamyl 5-phosphate + NADPH + H(+). Its pathway is amino-acid biosynthesis; L-proline biosynthesis; L-glutamate 5-semialdehyde from L-glutamate: step 2/2. In terms of biological role, catalyzes the NADPH-dependent reduction of L-glutamate 5-phosphate into L-glutamate 5-semialdehyde and phosphate. The product spontaneously undergoes cyclization to form 1-pyrroline-5-carboxylate. This Mycobacterium leprae (strain TN) protein is Gamma-glutamyl phosphate reductase.